Consider the following 247-residue polypeptide: Probable chemoreceptor glutamine deamidase CheD (247 aa).

The tract at residues Lys204 to Ala247 is disordered.

The protein belongs to the CheD family.

The enzyme catalyses L-glutaminyl-[protein] + H2O = L-glutamyl-[protein] + NH4(+). Functionally, probably deamidates glutamine residues to glutamate on methyl-accepting chemotaxis receptors (MCPs), playing an important role in chemotaxis. The chain is Probable chemoreceptor glutamine deamidase CheD from Burkholderia orbicola (strain MC0-3).